A 117-amino-acid chain; its full sequence is Protein Wnt-6 (117 aa).

Ser-1 carries the O-palmitoleoyl serine; by PORCN lipid modification. A disulfide bridge links Cys-83 with Cys-98. An N-linked (GlcNAc...) asparagine glycan is attached at Asn-84.

This sequence belongs to the Wnt family. In terms of processing, palmitoleoylation is required for efficient binding to frizzled receptors. Depalmitoleoylation leads to Wnt signaling pathway inhibition.

The protein resides in the secreted. Its subcellular location is the extracellular space. The protein localises to the extracellular matrix. In terms of biological role, ligand for members of the frizzled family of seven transmembrane receptors. Probable developmental protein. May be a signaling molecule which affects the development of discrete regions of tissues. Is likely to signal over only few cell diameters. The sequence is that of Protein Wnt-6 (WNT-6) from Evasterias troschelii (Mottled sea star).